Consider the following 168-residue polypeptide: Phosphopantetheine adenylyltransferase (168 aa).

Residue Thr13 participates in substrate binding. ATP is bound by residues 13–14 and His21; that span reads TF. Substrate contacts are provided by Lys45, Leu78, and Arg92. Residues 93–95, Glu103, and 128–134 each bind ATP; these read GLR and TQFISSG.

This sequence belongs to the bacterial CoaD family. In terms of assembly, homohexamer. It depends on Mg(2+) as a cofactor.

The protein localises to the cytoplasm. It catalyses the reaction (R)-4'-phosphopantetheine + ATP + H(+) = 3'-dephospho-CoA + diphosphate. The protein operates within cofactor biosynthesis; coenzyme A biosynthesis; CoA from (R)-pantothenate: step 4/5. In terms of biological role, reversibly transfers an adenylyl group from ATP to 4'-phosphopantetheine, yielding dephospho-CoA (dPCoA) and pyrophosphate. This chain is Phosphopantetheine adenylyltransferase, found in Wolbachia sp. subsp. Drosophila simulans (strain wRi).